The chain runs to 330 residues: Intraflagellar transport protein 46 homolog (330 aa).

Disordered regions lie at residues 1–21 (MDRP…ATPR) and 55–112 (SIKT…EGVY). Over residues 7 to 16 (ETVDIPDSED) the composition is skewed to acidic residues. Residues 68–79 (SSSEKLCDRGSS) are compositionally biased toward basic and acidic residues. Residues 80-101 (DDDDDDDNDDDEDEDDDDDDEN) are compositionally biased toward acidic residues.

The protein belongs to the IFT46 family.

It localises to the cytoplasm. Its subcellular location is the cytoskeleton. The protein resides in the cilium basal body. The protein localises to the cell projection. It is found in the cilium. Its function is as follows. Forms part of a complex involved in intraflagellar transport (IFT), the bi-directional movement of particles required for the assembly, maintenance and functioning of primary cilia. This chain is Intraflagellar transport protein 46 homolog, found in Schistosoma japonicum (Blood fluke).